The following is a 404-amino-acid chain: Dihydrolipoyllysine-residue acetyltransferase component of pyruvate dehydrogenase complex (404 aa).

The Lipoyl-binding domain occupies 2–78 (PIKILMPALS…PVNSLIAVLS (77 aa)). At K43 the chain carries N6-lipoyllysine. In terms of domain architecture, Peripheral subunit-binding (PSBD) spans 128–165 (FASPLAKRLAKIRNIRLESVQGSGPHGRIVKQDILSYS). H377 is a catalytic residue.

It belongs to the 2-oxoacid dehydrogenase family. As to quaternary structure, forms a 24-polypeptide structural core with octahedral symmetry. The cofactor is (R)-lipoate.

It carries out the reaction N(6)-[(R)-dihydrolipoyl]-L-lysyl-[protein] + acetyl-CoA = N(6)-[(R)-S(8)-acetyldihydrolipoyl]-L-lysyl-[protein] + CoA. Functionally, the pyruvate dehydrogenase complex catalyzes the overall conversion of pyruvate to acetyl-CoA and CO(2). It contains multiple copies of three enzymatic components: pyruvate dehydrogenase (E1), dihydrolipoamide acetyltransferase (E2) and lipoamide dehydrogenase (E3). This is Dihydrolipoyllysine-residue acetyltransferase component of pyruvate dehydrogenase complex (pdhC) from Rickettsia typhi (strain ATCC VR-144 / Wilmington).